The chain runs to 200 residues: NADH-quinone oxidoreductase subunit C (200 aa).

Belongs to the complex I 30 kDa subunit family. NDH-1 is composed of 14 different subunits. Subunits NuoB, C, D, E, F, and G constitute the peripheral sector of the complex.

The protein resides in the cell inner membrane. The enzyme catalyses a quinone + NADH + 5 H(+)(in) = a quinol + NAD(+) + 4 H(+)(out). Functionally, NDH-1 shuttles electrons from NADH, via FMN and iron-sulfur (Fe-S) centers, to quinones in the respiratory chain. The immediate electron acceptor for the enzyme in this species is believed to be ubiquinone. Couples the redox reaction to proton translocation (for every two electrons transferred, four hydrogen ions are translocated across the cytoplasmic membrane), and thus conserves the redox energy in a proton gradient. This chain is NADH-quinone oxidoreductase subunit C, found in Paraburkholderia phytofirmans (strain DSM 17436 / LMG 22146 / PsJN) (Burkholderia phytofirmans).